The sequence spans 94 residues: Small ribosomal subunit protein uS19 (94 aa).

The protein belongs to the universal ribosomal protein uS19 family.

Protein S19 forms a complex with S13 that binds strongly to the 16S ribosomal RNA. This chain is Small ribosomal subunit protein uS19, found in Pelotomaculum thermopropionicum (strain DSM 13744 / JCM 10971 / SI).